A 156-amino-acid polypeptide reads, in one-letter code: Ribosomal RNA large subunit methyltransferase H (156 aa).

Residues Leu-73, Gly-104, and 123 to 128 contribute to the S-adenosyl-L-methionine site; that span reads IGPLTL.

It belongs to the RNA methyltransferase RlmH family. Homodimer.

The protein resides in the cytoplasm. The catalysed reaction is pseudouridine(1915) in 23S rRNA + S-adenosyl-L-methionine = N(3)-methylpseudouridine(1915) in 23S rRNA + S-adenosyl-L-homocysteine + H(+). Its function is as follows. Specifically methylates the pseudouridine at position 1915 (m3Psi1915) in 23S rRNA. In Xanthomonas oryzae pv. oryzae (strain MAFF 311018), this protein is Ribosomal RNA large subunit methyltransferase H.